The following is a 461-amino-acid chain: Adenine DNA glycosylase (461 aa).

Glu69 acts as the Proton donor/acceptor in catalysis. Residues Cys226, Cys233, Cys236, and Cys242 each coordinate [4Fe-4S] cluster. One can recognise a Nudix hydrolase domain in the interval 296 to 437; that stretch reads QREERALVVI…RAALEIKKRK (142 aa). A Nudix box motif is present at residues 340-366; it reads FGQESWPKDMDAEFQKSIAQWISNDSR.

The protein belongs to the Nth/MutY family. As to quaternary structure, monomer. It depends on [4Fe-4S] cluster as a cofactor.

The catalysed reaction is Hydrolyzes free adenine bases from 7,8-dihydro-8-oxoguanine:adenine mismatched double-stranded DNA, leaving an apurinic site.. In terms of biological role, adenine glycosylase active on G-A mispairs. Has glycosylase and nicking activities and is active at A/G and A/GO sites. The chain is Adenine DNA glycosylase (myh1) from Schizosaccharomyces pombe (strain 972 / ATCC 24843) (Fission yeast).